Here is a 1023-residue protein sequence, read N- to C-terminus: 2-oxoglutarate dehydrogenase complex component E1 (1023 aa).

Residues 1–40 (MFHLRTCAAKLRPLTASQTVKTFSQNKPAAIRTFQQIRCY) constitute a mitochondrion transit peptide. The residue at position 74 (lysine 74) is an N6-succinyllysine. Serine 100 carries the post-translational modification Phosphoserine. Ca(2+) is bound by residues histidine 143, aspartate 156, and aspartate 158. Arginine 312 is a binding site for thiamine diphosphate. Lysine 401 bears the N6-acetyllysine mark. Thiamine diphosphate-binding residues include aspartate 411, asparagine 444, and isoleucine 446. Aspartate 411, asparagine 444, and isoleucine 446 together coordinate Mg(2+). Lysine 534 participates in a covalent cross-link: Glycyl lysine isopeptide (Lys-Gly) (interchain with G-Cter in ubiquitin). Lysine 564 carries the N6-succinyllysine modification. Thiamine diphosphate is bound at residue glutamine 676. Residues 933–939 (LSPFPFD) form a recognized by alloreactive CD8 cytotoxic T-lymphocytes in association with a class I MHC protein region. The residue at position 970 (lysine 970) is an N6-acetyllysine.

This sequence belongs to the alpha-ketoglutarate dehydrogenase family. In terms of assembly, homodimer. The 2-oxoglutarate dehydrogenase complex is composed of OGDH (2-oxoglutarate dehydrogenase; E1), DLST (dihydrolipoamide succinyltransferase; E2), DLD (dihydrolipoamide dehydrogenase; E3) and the assembly factor KGD4. It contains multiple copies of the three enzymatic components (E1, E2 and E3). In the nucleus, the 2-oxoglutarate dehydrogenase complex associates with KAT2A. Interacts with ABHD11; this interaction maintains the functional lipoylation of the 2-oxoglutarate dehydrogenase complex. The cofactor is thiamine diphosphate. It depends on Mg(2+) as a cofactor.

It localises to the mitochondrion. It is found in the nucleus. The catalysed reaction is N(6)-[(R)-lipoyl]-L-lysyl-[protein] + 2-oxoglutarate + H(+) = N(6)-[(R)-S(8)-succinyldihydrolipoyl]-L-lysyl-[protein] + CO2. With respect to regulation, calcium ions and ADP stimulate, whereas ATP and NADH reduce catalytic activity. Functionally, 2-oxoglutarate dehydrogenase (E1o) component of the 2-oxoglutarate dehydrogenase complex (OGDHC). Participates in the first step, rate limiting for the overall conversion of 2-oxoglutarate to succinyl-CoA and CO(2) catalyzed by the whole OGDHC. Catalyzes the irreversible decarboxylation of 2-oxoglutarate (alpha-ketoglutarate) via the thiamine diphosphate (ThDP) cofactor and subsequent transfer of the decarboxylated acyl intermediate on an oxidized dihydrolipoyl group that is covalently amidated to the E2 enzyme (dihydrolipoyllysine-residue succinyltransferase or DLST). Plays a key role in the Krebs (citric acid) cycle, which is a common pathway for oxidation of fuel molecules, including carbohydrates, fatty acids, and amino acids. Can catalyze the decarboxylation of 2-oxoadipate in vitro, but at a much lower rate than 2-oxoglutarate. Mainly active in the mitochondrion. A fraction of the 2-oxoglutarate dehydrogenase complex also localizes in the nucleus and is required for lysine succinylation of histones: associates with KAT2A on chromatin and provides succinyl-CoA to histone succinyltransferase KAT2A. This chain is 2-oxoglutarate dehydrogenase complex component E1, found in Mus musculus (Mouse).